A 408-amino-acid polypeptide reads, in one-letter code: MPLSVGQGYFTSSISSEKFNAIKESARLPELSLWEKIKAYFFTTHHAEALECIFNLYHHQELNLTPVQVRGAYIKLRALASQGCKEQFIIESQEHADKLIIKDDNGENILSIEVECHPEAFGLAKEINKSHPKPKNISLGDITRLVFFGDSLSDSLGRMFEKTHHILPSYGQYFGGRFTNGFTWTEFLSSPHFLGKEMLNFAEGGSTSASYSCFNCIGDFVSNTDRQVASYTPSHQDLAIFLLGANDYMTLHKDNVIMVVEQQIDDIEKIISGGVNNVLVMGIPDLSLTPYGKHSDEKRKLKDESIAHNALLKTNVEELKEKYPQHKICYYETADAFKVIMEAASNIGYDTENPYTHHGYVHVPGAKDPQLDICPQYVFNDLVHPTQEVHHCFAIMLESFIAHHYSTE.

Serine 151 acts as the Nucleophile in catalysis. Catalysis depends on residues aspartate 381 and histidine 384.

Belongs to the 'GDSL' lipolytic enzyme family. In terms of assembly, interacts with RhoA and indirectly with SifA.

The protein resides in the secreted. The protein localises to the host cytoplasm. Its function is as follows. Effector proteins function to alter host cell physiology and promote bacterial survival in host tissues. This protein is required for endosomal tubulation and negatively regulates the formation of Salmonella-induced filaments (Sifs) in epithelial cells. Has both deacylase and esterification activities in vitro, but esterification is probably the dominant activity in host cells. Significantly contributes to cholesterol esterification, which reduces cellular cholesterol in cells and abrogates the ability of SifA to associate with cholesterol and LAMP-1 vesicles. This is Secreted effector protein SseJ (sseJ) from Salmonella typhimurium (strain LT2 / SGSC1412 / ATCC 700720).